Consider the following 267-residue polypeptide: Protein BMH1 (267 aa).

S2 carries the N-acetylserine modification. K76 is covalently cross-linked (Glycyl lysine isopeptide (Lys-Gly) (interchain with G-Cter in ubiquitin)). S89 is modified (phosphoserine). Residues 236 to 267 form a disordered region; sequence DMSESGQAEDQQQQQQHQQQQPPAAAEGEAPK. The segment covering 243–267 has biased composition (low complexity); the sequence is AEDQQQQQQHQQQQPPAAAEGEAPK.

Belongs to the 14-3-3 family. In terms of assembly, homodimer. Interacts with NTH1 (via N-terminus when phosphorylated by PKA); the interaction is direct and activates NTH1. Interacts with FIN1.

Functionally, involved in growth regulation. The polypeptide is Protein BMH1 (BMH1) (Saccharomyces cerevisiae (strain ATCC 204508 / S288c) (Baker's yeast)).